Here is a 193-residue protein sequence, read N- to C-terminus: Bcl-2-like protein 2 (193 aa).

Ala2 is subject to N-acetylalanine. A BH4 motif is present at residues 9–29 (DTRALVADFVGYKLRQKGYVC). Residues 85 to 104 (ELFQGGPNWGRLVAFFVFGA) carry the BH1 motif. A BH2 motif is present at residues 136–151 (DWIHSSGGWAEFTALY).

Belongs to the Bcl-2 family. Interacts with HIF3A isoform 2 (via C-terminus domain). Interacts with BOP. As to expression, expressed in almost all myeloid cell lines and in a wide range of tissues, with highest levels in brain, colon, and salivary gland.

The protein resides in the mitochondrion membrane. Functionally, promotes cell survival. Blocks dexamethasone-induced apoptosis. Mediates survival of postmitotic Sertoli cells by suppressing death-promoting activity of BAX. The polypeptide is Bcl-2-like protein 2 (Bcl2l2) (Mus musculus (Mouse)).